Here is a 497-residue protein sequence, read N- to C-terminus: Nucleoside transporter 1 (497 aa).

Topologically, residues methionine 1–glutamate 26 are cytoplasmic. A helical transmembrane segment spans residues phenylalanine 27–valine 47. At phenylalanine 48–asparagine 77 the chain is on the extracellular side. A helical transmembrane segment spans residues valine 78 to leucine 98. The Cytoplasmic segment spans residues leucine 99–methionine 107. A helical transmembrane segment spans residues leucine 108–valine 128. Topologically, residues proline 129 to glutamate 135 are extracellular. A helical membrane pass occupies residues alanine 136–phenylalanine 156. Over glutamate 157–threonine 172 the chain is Cytoplasmic. The helical transmembrane segment at serine 173–valine 193 threads the bilayer. Residues lysine 194–serine 208 lie on the Extracellular side of the membrane. Residues tyrosine 209–methionine 229 form a helical membrane-spanning segment. Topologically, residues arginine 230 to lysine 337 are cytoplasmic. A compositionally biased stretch (basic and acidic residues) spans asparagine 286–glutamate 299. Residues asparagine 286–glutamate 316 are disordered. A helical membrane pass occupies residues tryptophan 338–alanine 358. The Extracellular portion of the chain corresponds to threonine 359–methionine 361. Residues phenylalanine 362–leucine 382 form a helical membrane-spanning segment. Residues glycine 383–arginine 400 are Cytoplasmic-facing. Residues tryptophan 401–serine 421 traverse the membrane as a helical segment. The Extracellular portion of the chain corresponds to tyrosine 422 to tyrosine 432. The helical transmembrane segment at valine 433–glycine 453 threads the bilayer. At proline 454–arginine 465 the chain is on the cytoplasmic side. The helical transmembrane segment at phenylalanine 466–leucine 486 threads the bilayer. Residues serine 487–tyrosine 497 lie on the Extracellular side of the membrane.

The protein belongs to the SLC29A/ENT transporter (TC 2.A.57) family.

It localises to the cell membrane. It catalyses the reaction adenosine(in) = adenosine(out). The catalysed reaction is hypoxanthine(out) = hypoxanthine(in). It carries out the reaction inosine(in) = inosine(out). The enzyme catalyses uridine(out) = uridine(in). It catalyses the reaction cytidine(in) = cytidine(out). Nucleoside transporter with broad substrate specificity. Transports adenosine with high affinity. Can also transport hypoxanthine, inosine, uridine and cytidine. The chain is Nucleoside transporter 1 from Crithidia fasciculata.